A 319-amino-acid polypeptide reads, in one-letter code: tRNA-modifying protein YgfZ (319 aa).

Positions 27 and 189 each coordinate folate.

This sequence belongs to the tRNA-modifying YgfZ family.

The protein resides in the cytoplasm. Its function is as follows. Folate-binding protein involved in regulating the level of ATP-DnaA and in the modification of some tRNAs. It is probably a key factor in regulatory networks that act via tRNA modification, such as initiation of chromosomal replication. The polypeptide is tRNA-modifying protein YgfZ (Buchnera aphidicola subsp. Acyrthosiphon pisum (strain APS) (Acyrthosiphon pisum symbiotic bacterium)).